The following is a 294-amino-acid chain: Phosphatidylserine decarboxylase proenzyme (294 aa).

Residues Asp-113, His-169, and Ser-256 each act as charge relay system; for autoendoproteolytic cleavage activity in the active site. The active-site Schiff-base intermediate with substrate; via pyruvic acid; for decarboxylase activity is Ser-256. Ser-256 bears the Pyruvic acid (Ser); by autocatalysis mark.

This sequence belongs to the phosphatidylserine decarboxylase family. PSD-B subfamily. Prokaryotic type II sub-subfamily. As to quaternary structure, heterodimer of a large membrane-associated beta subunit and a small pyruvoyl-containing alpha subunit. Requires pyruvate as cofactor. In terms of processing, is synthesized initially as an inactive proenzyme. Formation of the active enzyme involves a self-maturation process in which the active site pyruvoyl group is generated from an internal serine residue via an autocatalytic post-translational modification. Two non-identical subunits are generated from the proenzyme in this reaction, and the pyruvate is formed at the N-terminus of the alpha chain, which is derived from the carboxyl end of the proenzyme. The autoendoproteolytic cleavage occurs by a canonical serine protease mechanism, in which the side chain hydroxyl group of the serine supplies its oxygen atom to form the C-terminus of the beta chain, while the remainder of the serine residue undergoes an oxidative deamination to produce ammonia and the pyruvoyl prosthetic group on the alpha chain. During this reaction, the Ser that is part of the protease active site of the proenzyme becomes the pyruvoyl prosthetic group, which constitutes an essential element of the active site of the mature decarboxylase.

Its subcellular location is the cell membrane. It carries out the reaction a 1,2-diacyl-sn-glycero-3-phospho-L-serine + H(+) = a 1,2-diacyl-sn-glycero-3-phosphoethanolamine + CO2. Its pathway is phospholipid metabolism; phosphatidylethanolamine biosynthesis; phosphatidylethanolamine from CDP-diacylglycerol: step 2/2. Catalyzes the formation of phosphatidylethanolamine (PtdEtn) from phosphatidylserine (PtdSer). The protein is Phosphatidylserine decarboxylase proenzyme of Clostridium perfringens (strain SM101 / Type A).